Here is a 97-residue protein sequence, read N- to C-terminus: uncharacterized protein (97 aa).

Positions 1 to 24 (MTQKNGADRPDDYKRFSSLDKEYD) are enriched in basic and acidic residues. The tract at residues 1 to 97 (MTQKNGADRP…FEGTIDQNLD (97 aa)) is disordered. Over residues 31-43 (SNTETESVNTETQ) the composition is skewed to low complexity. A compositionally biased stretch (basic and acidic residues) spans 44 to 53 (THNKENKNDT).

This is an uncharacterized protein from Bacillus subtilis (strain 168).